Reading from the N-terminus, the 298-residue chain is tRNA U34 carboxymethyltransferase (298 aa).

Residues Lys-69, Trp-83, Lys-88, Gly-107, 129-131 (DPS), 156-157 (VE), Tyr-176, and Arg-291 each bind carboxy-S-adenosyl-L-methionine.

The protein belongs to the class I-like SAM-binding methyltransferase superfamily. CmoB family. As to quaternary structure, homotetramer.

The enzyme catalyses carboxy-S-adenosyl-L-methionine + 5-hydroxyuridine(34) in tRNA = 5-carboxymethoxyuridine(34) in tRNA + S-adenosyl-L-homocysteine + H(+). In terms of biological role, catalyzes carboxymethyl transfer from carboxy-S-adenosyl-L-methionine (Cx-SAM) to 5-hydroxyuridine (ho5U) to form 5-carboxymethoxyuridine (cmo5U) at position 34 in tRNAs. The chain is tRNA U34 carboxymethyltransferase from Campylobacter curvus (strain 525.92).